Consider the following 518-residue polypeptide: Type II methyltransferase M.HindII (518 aa).

Belongs to the N(4)/N(6)-methyltransferase family.

The catalysed reaction is a 2'-deoxyadenosine in DNA + S-adenosyl-L-methionine = an N(6)-methyl-2'-deoxyadenosine in DNA + S-adenosyl-L-homocysteine + H(+). Its function is as follows. A gamma subtype methylase, recognizes the double-stranded sequence 5'-GTYRAC-3', methylates A-5 on both strands, and protects the DNA from cleavage by the HindII endonuclease. The protein is Type II methyltransferase M.HindII (hindIIM) of Haemophilus influenzae (strain ATCC 51907 / DSM 11121 / KW20 / Rd).